The sequence spans 204 residues: dITP/XTP pyrophosphatase (204 aa).

8-13 contributes to the substrate binding site; it reads SRNRKK. Aspartate 73 functions as the Proton acceptor in the catalytic mechanism. Aspartate 73 contributes to the Mg(2+) binding site. Substrate-binding positions include serine 74, 155–158, lysine 179, and 184–185; these read FGYD and HR.

It belongs to the HAM1 NTPase family. Homodimer. Mg(2+) serves as cofactor.

The catalysed reaction is XTP + H2O = XMP + diphosphate + H(+). It catalyses the reaction dITP + H2O = dIMP + diphosphate + H(+). It carries out the reaction ITP + H2O = IMP + diphosphate + H(+). Functionally, pyrophosphatase that catalyzes the hydrolysis of nucleoside triphosphates to their monophosphate derivatives, with a high preference for the non-canonical purine nucleotides XTP (xanthosine triphosphate), dITP (deoxyinosine triphosphate) and ITP. Seems to function as a house-cleaning enzyme that removes non-canonical purine nucleotides from the nucleotide pool, thus preventing their incorporation into DNA/RNA and avoiding chromosomal lesions. The protein is dITP/XTP pyrophosphatase of Mycolicibacterium paratuberculosis (strain ATCC BAA-968 / K-10) (Mycobacterium paratuberculosis).